Here is a 221-residue protein sequence, read N- to C-terminus: Small ribosomal subunit protein uS5 (221 aa).

The segment at 1–40 (MMAQRNSGAPDNAGGSNDGREGGRGRRDNRDDRRGGRDNA) is disordered. Residues 18-40 (DGREGGRGRRDNRDDRRGGRDNA) show a composition bias toward basic and acidic residues. In terms of domain architecture, S5 DRBM spans 45 to 108 (YLERVVTINR…DEARKNFFRV (64 aa)).

This sequence belongs to the universal ribosomal protein uS5 family. In terms of assembly, part of the 30S ribosomal subunit. Contacts proteins S4 and S8.

In terms of biological role, with S4 and S12 plays an important role in translational accuracy. Located at the back of the 30S subunit body where it stabilizes the conformation of the head with respect to the body. This Mycobacteroides abscessus (strain ATCC 19977 / DSM 44196 / CCUG 20993 / CIP 104536 / JCM 13569 / NCTC 13031 / TMC 1543 / L948) (Mycobacterium abscessus) protein is Small ribosomal subunit protein uS5.